Reading from the N-terminus, the 147-residue chain is Myosin regulatory light chain (147 aa).

Thr1 is subject to N-acetylthreonine. EF-hand domains are found at residues 2–37, 73–108, and 109–144; these read ASAD…LGKN, EQSK…LGDA, and LTSS…GYPL. Residues Asp15, Asp17, Asp19, Lys21, Glu26, Asp86, Asn90, Thr92, and Glu97 each coordinate Ca(2+).

In Physarum polycephalum (Slime mold), this protein is Myosin regulatory light chain.